Here is a 497-residue protein sequence, read N- to C-terminus: Acetyl-coenzyme A carboxylase carboxyl transferase subunit beta, chloroplastic (497 aa).

The CoA carboxyltransferase N-terminal domain maps to 230–497 (LWVQCENCYG…FFPVNSNSIK (268 aa)). Zn(2+) contacts are provided by Cys-234, Cys-237, Cys-253, and Cys-256. A C4-type zinc finger spans residues 234–256 (CENCYGLNYKKFFRSKFNICEQC).

The protein belongs to the AccD/PCCB family. Acetyl-CoA carboxylase is a heterohexamer composed of biotin carboxyl carrier protein, biotin carboxylase and 2 subunits each of ACCase subunit alpha and ACCase plastid-coded subunit beta (accD). Zn(2+) serves as cofactor.

It localises to the plastid. The protein localises to the chloroplast stroma. It carries out the reaction N(6)-carboxybiotinyl-L-lysyl-[protein] + acetyl-CoA = N(6)-biotinyl-L-lysyl-[protein] + malonyl-CoA. The protein operates within lipid metabolism; malonyl-CoA biosynthesis; malonyl-CoA from acetyl-CoA: step 1/1. In terms of biological role, component of the acetyl coenzyme A carboxylase (ACC) complex. Biotin carboxylase (BC) catalyzes the carboxylation of biotin on its carrier protein (BCCP) and then the CO(2) group is transferred by the transcarboxylase to acetyl-CoA to form malonyl-CoA. This is Acetyl-coenzyme A carboxylase carboxyl transferase subunit beta, chloroplastic from Nandina domestica (Heavenly bamboo).